We begin with the raw amino-acid sequence, 104 residues long: SPbeta prophage-derived stress response protein SCP1 (104 aa).

Its subcellular location is the cytoplasm. This chain is SPbeta prophage-derived stress response protein SCP1 (yorD), found in Bacillus subtilis (strain 168).